Here is a 953-residue protein sequence, read N- to C-terminus: Zinc finger CCCH domain-containing protein 18 (953 aa).

Residue Met-1 is modified to N-acetylmethionine. Residues Met-1–Pro-14 show a composition bias toward basic and acidic residues. 2 disordered regions span residues Met-1–Pro-222 and Gln-391–Arg-928. At Ser-6 the chain carries Phosphoserine. Residues Glu-15 to Asp-26 show a composition bias toward acidic residues. Phosphoserine is present on residues Ser-34, Ser-46, Ser-53, Ser-59, Ser-67, Ser-74, Ser-78, Ser-83, and Ser-95. Positions Gln-60 to Arg-72 are enriched in acidic residues. Positions Cys-97–Glu-106 are enriched in acidic residues. The stretch at Glu-105–Val-134 forms a coiled coil. A compositionally biased stretch (basic and acidic residues) spans Asp-107–Asp-124. Thr-109 is modified (phosphothreonine). 2 positions are modified to phosphoserine: Ser-110 and Ser-118. 2 stretches are compositionally biased toward acidic residues: residues Glu-125 to Glu-136 and Gln-143 to Lys-158. Over residues Gly-159 to Lys-168 the composition is skewed to basic and acidic residues. Thr-162 carries the post-translational modification Phosphothreonine. Phosphoserine occurs at positions 173 and 179. The segment covering Gly-175–Asp-190 has biased composition (basic and acidic residues). A compositionally biased stretch (acidic residues) spans Asp-191–Glu-207. Positions Gly-208–Lys-217 are enriched in basic and acidic residues. The segment at Arg-219–Val-245 adopts a C3H1-type zinc-finger fold. Residues Glu-396 to Lys-482 are compositionally biased toward basic and acidic residues. Positions His-399–Asp-464 form a coiled coil. Phosphoserine is present on Ser-487. Lys-510 participates in a covalent cross-link: Glycyl lysine isopeptide (Lys-Gly) (interchain with G-Cter in SUMO2). Basic and acidic residues predominate over residues Lys-510–Arg-520. 3 positions are modified to phosphoserine: Ser-532, Ser-534, and Ser-536. The segment covering Ser-545–Pro-606 has biased composition (low complexity). Residues Lys-622 and Lys-661 each participate in a glycyl lysine isopeptide (Lys-Gly) (interchain with G-Cter in SUMO2) cross-link. Basic and acidic residues predominate over residues Lys-661–Arg-670. Composition is skewed to low complexity over residues Gly-692–Ser-725 and Ala-736–Ala-750. Residues Lys-760–Ser-774 are compositionally biased toward basic and acidic residues. Lys-766 participates in a covalent cross-link: Glycyl lysine isopeptide (Lys-Gly) (interchain with G-Cter in SUMO2). Residues Pro-778–Gln-798 show a composition bias toward low complexity. N6-acetyllysine is present on Lys-814. Lys-817 is covalently cross-linked (Glycyl lysine isopeptide (Lys-Gly) (interchain with G-Cter in SUMO2)). Residues Ala-824–Gln-841 show a composition bias toward basic and acidic residues. Ser-842, Ser-852, Ser-868, Ser-893, and Ser-896 each carry phosphoserine. Low complexity predominate over residues Ser-893 to Pro-906. Residue Lys-908 forms a Glycyl lysine isopeptide (Lys-Gly) (interchain with G-Cter in SUMO2) linkage. Residues Ser-916–Leu-925 are compositionally biased toward polar residues. Residues Lys-921 to Pro-950 are a coiled coil.

As to quaternary structure, interacts with ZFC3H1 in a RNase-insensitive manner.

The protein localises to the nucleus. This Homo sapiens (Human) protein is Zinc finger CCCH domain-containing protein 18.